The sequence spans 545 residues: MTTNYIFVTGGVVSSLGKGIAAASLAAILEARGLNVTMMKLDPYINVDPGTMSPIQHGEVFVTEDGAETDLDLGHYERFIRTKMSRRNNFTTGRIYSDVLRKERRGDYLGATVQVIPHITNAIKERIVAGGEGHDVVLVEIGGTVGDIESLPFLEAIRQLAVDIGREHALFMHLTLVPYMAAAGEVKTKPTQHSVKELLSIGIQPDILICRSDRAVPANERAKIALFCNVAEKAVISLKDVDSIYKIPGLLKSQGLDDYICKRFSLNVPEANLSEWEQVIYEEANPAGEVTIGMVGKYIELPDAYKSVIEALKHGGLKNRVTVNIKLIDSQDVETRGVEILKDLDAILIPGGFGYRGVEGKIATARFARENNIPYLGICLGMQVALIEFARNVVGMENANSTEFVPDCKYPVVALITEWRDEDGNVEVRTEKSDLGGTMRLGAQACQVSEDSLVRKMYGSTTITERHRHRYEVNNMLLKQIEAAGLRIAGRSGDDQLVEIIEVPNHPWFVACQFHPEFTSTPRDGHPLFAGFVKAASEYQKRQAK.

Positions 1–266 (MTTNYIFVTG…DDYICKRFSL (266 aa)) are amidoligase domain. Ser-14 is a binding site for CTP. Ser-14 serves as a coordination point for UTP. Residues 15 to 20 (SLGKGI) and Asp-72 contribute to the ATP site. The Mg(2+) site is built by Asp-72 and Glu-140. Residues 147–149 (DIE), 187–192 (KTKPTQ), and Lys-223 each bind CTP. UTP is bound by residues 187-192 (KTKPTQ) and Lys-223. An ATP-binding site is contributed by 239 to 241 (KDV). Residues 291–542 (TIGMVGKYIE…VKAASEYQKR (252 aa)) enclose the Glutamine amidotransferase type-1 domain. Gly-352 provides a ligand contact to L-glutamine. The Nucleophile; for glutamine hydrolysis role is filled by Cys-379. Residues 380–383 (LGMQ), Glu-403, and Arg-470 contribute to the L-glutamine site. Residues His-515 and Glu-517 contribute to the active site.

The protein belongs to the CTP synthase family. In terms of assembly, homotetramer.

The enzyme catalyses UTP + L-glutamine + ATP + H2O = CTP + L-glutamate + ADP + phosphate + 2 H(+). It carries out the reaction L-glutamine + H2O = L-glutamate + NH4(+). It catalyses the reaction UTP + NH4(+) + ATP = CTP + ADP + phosphate + 2 H(+). It functions in the pathway pyrimidine metabolism; CTP biosynthesis via de novo pathway; CTP from UDP: step 2/2. Allosterically activated by GTP, when glutamine is the substrate; GTP has no effect on the reaction when ammonia is the substrate. The allosteric effector GTP functions by stabilizing the protein conformation that binds the tetrahedral intermediate(s) formed during glutamine hydrolysis. Inhibited by the product CTP, via allosteric rather than competitive inhibition. Functionally, catalyzes the ATP-dependent amination of UTP to CTP with either L-glutamine or ammonia as the source of nitrogen. Regulates intracellular CTP levels through interactions with the four ribonucleotide triphosphates. This chain is CTP synthase, found in Enterobacter sp. (strain 638).